We begin with the raw amino-acid sequence, 147 residues long: Peptide methionine sulfoxide reductase MsrB (147 aa).

Positions 8 to 131 (KEELKKVLTE…NSASLKFIPK (124 aa)) constitute a MsrB domain. The active-site Nucleophile is the Cys120.

This sequence belongs to the MsrB Met sulfoxide reductase family.

It catalyses the reaction L-methionyl-[protein] + [thioredoxin]-disulfide + H2O = L-methionyl-(R)-S-oxide-[protein] + [thioredoxin]-dithiol. The sequence is that of Peptide methionine sulfoxide reductase MsrB from Clostridium perfringens (strain ATCC 13124 / DSM 756 / JCM 1290 / NCIMB 6125 / NCTC 8237 / Type A).